A 394-amino-acid chain; its full sequence is 12-oxophytodienoate reductase 7 (394 aa).

FMN-binding positions include 35 to 37 and Gln110; that span reads PMT. Residue 189-192 coordinates substrate; it reads HGAH. The active-site Proton donor is Tyr194. Residue Arg241 participates in FMN binding. Arg286 provides a ligand contact to substrate. Residues Gly324 and 345–346 each bind FMN; that span reads GR. The Microbody targeting signal signature appears at 392–394; the sequence is SRM.

The protein belongs to the NADH:flavin oxidoreductase/NADH oxidase family. FMN is required as a cofactor.

The protein resides in the peroxisome. It carries out the reaction (1S,2S)-OPC-8 + NADP(+) = (9S,13S,15Z)-12-oxophyto-10,15-dienoate + NADPH + H(+). The protein operates within lipid metabolism; oxylipin biosynthesis. Its function is as follows. Involved in the biosynthesis of jasmonate (JA) and perhaps in biosynthesis or metabolism of other oxylipin signaling moleclules. In vitro, reduces cis(+)-12-oxophytodienoic acid (cis(+)-OPDA) and cis(-)-OPDA to cis(+)-OPC-8:0 and cis(-)-OPC-8:0, respectively. May be required for the spatial and temporal regulation of JA levels during dehiscence of anthers, promoting the stomium degeneration program. Involved in carbohydrate transport underlying normal lodicule function during anthesis. This is 12-oxophytodienoate reductase 7 from Oryza sativa subsp. japonica (Rice).